The chain runs to 287 residues: Large ribosomal subunit protein uL5m (287 aa).

The N-terminal 18 residues, Met-1–Arg-18, are a transit peptide targeting the mitochondrion. A compositionally biased stretch (basic and acidic residues) spans Asp-80–Pro-89. The interval Asp-80–Asn-109 is disordered.

Belongs to the universal ribosomal protein uL5 family. As to quaternary structure, component of the mitochondrial large ribosomal subunit (mt-LSU). Mature yeast 74S mitochondrial ribosomes consist of a small (37S) and a large (54S) subunit. The 37S small subunit contains a 15S ribosomal RNA (15S mt-rRNA) and at least 32 different proteins. The 54S large subunit contains a 21S rRNA (21S mt-rRNA) and at least 45 different proteins. Unlike bacterial L5, uL5m does not bind zinc.

It localises to the mitochondrion. Its function is as follows. Component of the mitochondrial ribosome (mitoribosome), a dedicated translation machinery responsible for the synthesis of mitochondrial genome-encoded proteins, including at least some of the essential transmembrane subunits of the mitochondrial respiratory chain. The mitoribosomes are attached to the mitochondrial inner membrane and translation products are cotranslationally integrated into the membrane. The sequence is that of Large ribosomal subunit protein uL5m (mrpl7) from Schizosaccharomyces pombe (strain 972 / ATCC 24843) (Fission yeast).